The chain runs to 152 residues: Nucleoside diphosphate kinase A (152 aa).

K12, F60, R88, and T94 together coordinate ATP. K100 participates in a covalent cross-link: Glycyl lysine isopeptide (Lys-Gly) (interchain with G-Cter in ubiquitin). Positions 105 and 115 each coordinate ATP. The active-site Pros-phosphohistidine intermediate is H118. Phosphoserine occurs at positions 120, 122, and 125.

The protein belongs to the NDK family. Hexamer of two different chains: An and B (A6, A5B, A4B2, A3B3, A2B4, AB5, B6). Interacts with PRUNE1. Component of the SET complex, composed of at least ANP32A, APEX1, HMGB2, NME1, SET and TREX1. Within this complex, interacts directly with SET. Also interacts with TREX1, but only following translocation to the nucleus. Requires Mg(2+) as cofactor.

It localises to the cytoplasm. The protein resides in the nucleus. The catalysed reaction is a 2'-deoxyribonucleoside 5'-diphosphate + ATP = a 2'-deoxyribonucleoside 5'-triphosphate + ADP. It catalyses the reaction a ribonucleoside 5'-diphosphate + ATP = a ribonucleoside 5'-triphosphate + ADP. With respect to regulation, autophosphorylation at His-118 increases serine/threonine protein kinase activity of the enzyme. Interaction with the SET complex inhibits exonuclease activity. Functionally, major role in the synthesis of nucleoside triphosphates other than ATP. The ATP gamma phosphate is transferred to the NDP beta phosphate via a ping-pong mechanism, using a phosphorylated active-site intermediate. Possesses nucleoside-diphosphate kinase, serine/threonine-specific protein kinase, geranyl and farnesyl pyrophosphate kinase, histidine protein kinase and 3'-5' exonuclease activities. Involved in cell proliferation, differentiation and development, signal transduction, G protein-coupled receptor endocytosis, and gene expression. Required for neural development including neural patterning and cell fate determination. During GZMA-mediated cell death, works in concert with TREX1. NME1 nicks one strand of DNA and TREX1 removes bases from the free 3' end to enhance DNA damage and prevent DNA end reannealing and rapid repair. This Canis lupus familiaris (Dog) protein is Nucleoside diphosphate kinase A (NME1).